The primary structure comprises 437 residues: Methionine aminopeptidase 2 (437 aa).

Residues 1–90 (MAAQAAPAEE…LFPNNQYPKG (90 aa)) are disordered. The segment covering 10 to 20 (ELSKLSVDETK) has biased composition (basic and acidic residues). A compositionally biased stretch (acidic residues) spans 31-42 (SDAESGDEEAEE). The span at 52 to 66 (AKKKKKRKPKKKKKA) shows a compositional bias: basic residues. H190 contributes to the substrate binding site. 3 residues coordinate a divalent metal cation: D210, D221, and H290. Substrate is bound at residue H298. E323 and E418 together coordinate a divalent metal cation.

It belongs to the peptidase M24A family. Methionine aminopeptidase eukaryotic type 2 subfamily. It depends on Co(2+) as a cofactor. Zn(2+) is required as a cofactor. Mn(2+) serves as cofactor. The cofactor is Fe(2+).

It localises to the cytoplasm. It carries out the reaction Release of N-terminal amino acids, preferentially methionine, from peptides and arylamides.. Cotranslationally removes the N-terminal methionine from nascent proteins. The N-terminal methionine is often cleaved when the second residue in the primary sequence is small and uncharged (Met-Ala-, Cys, Gly, Pro, Ser, Thr, or Val). This is Methionine aminopeptidase 2 from Neurospora crassa (strain ATCC 24698 / 74-OR23-1A / CBS 708.71 / DSM 1257 / FGSC 987).